The sequence spans 470 residues: ATP synthase subunit beta (470 aa).

155–162 (GGAGVGKT) is a binding site for ATP.

The protein belongs to the ATPase alpha/beta chains family. F-type ATPases have 2 components, CF(1) - the catalytic core - and CF(0) - the membrane proton channel. CF(1) has five subunits: alpha(3), beta(3), gamma(1), delta(1), epsilon(1). CF(0) has three main subunits: a(1), b(2) and c(9-12). The alpha and beta chains form an alternating ring which encloses part of the gamma chain. CF(1) is attached to CF(0) by a central stalk formed by the gamma and epsilon chains, while a peripheral stalk is formed by the delta and b chains.

Its subcellular location is the cell membrane. The enzyme catalyses ATP + H2O + 4 H(+)(in) = ADP + phosphate + 5 H(+)(out). Produces ATP from ADP in the presence of a proton gradient across the membrane. The catalytic sites are hosted primarily by the beta subunits. This Staphylococcus epidermidis (strain ATCC 35984 / DSM 28319 / BCRC 17069 / CCUG 31568 / BM 3577 / RP62A) protein is ATP synthase subunit beta.